A 172-amino-acid chain; its full sequence is uncharacterized protein (172 aa).

Belongs to the flavoredoxin family. The cofactor is FMN.

This is an uncharacterized protein from Pyrococcus abyssi (strain GE5 / Orsay).